A 220-amino-acid chain; its full sequence is Deoxyribose-phosphate aldolase (220 aa).

Asp89 serves as the catalytic Proton donor/acceptor. Lys152 (schiff-base intermediate with acetaldehyde) is an active-site residue. The active-site Proton donor/acceptor is the Lys181.

This sequence belongs to the DeoC/FbaB aldolase family. DeoC type 1 subfamily.

The protein resides in the cytoplasm. It carries out the reaction 2-deoxy-D-ribose 5-phosphate = D-glyceraldehyde 3-phosphate + acetaldehyde. It functions in the pathway carbohydrate degradation; 2-deoxy-D-ribose 1-phosphate degradation; D-glyceraldehyde 3-phosphate and acetaldehyde from 2-deoxy-alpha-D-ribose 1-phosphate: step 2/2. Functionally, catalyzes a reversible aldol reaction between acetaldehyde and D-glyceraldehyde 3-phosphate to generate 2-deoxy-D-ribose 5-phosphate. The sequence is that of Deoxyribose-phosphate aldolase from Enterococcus faecalis (strain ATCC 700802 / V583).